We begin with the raw amino-acid sequence, 553 residues long: Adenine deaminase (553 aa).

It belongs to the metallo-dependent hydrolases superfamily. Adenine deaminase family. Mn(2+) serves as cofactor.

It carries out the reaction adenine + H2O + H(+) = hypoxanthine + NH4(+). The sequence is that of Adenine deaminase from Methanosarcina acetivorans (strain ATCC 35395 / DSM 2834 / JCM 12185 / C2A).